Consider the following 260-residue polypeptide: MLEILYQDEWLVAVNKPSGWLVHRSWLDRDEKVVVMQTVRDQIGQHVFTAHRLDRPTSGVLLMGLSSEAGRLLAQQFEQHQIQKRYHAIVRGWLMEEAVLDYPLVEELDKIADKFAREDKGPQPAVTHYRGLATVEMPVATGRYPTTRYGLVELEPKTGRKHQLRRHLAHLRHPIIGDSKHGDLRQNRSGAEHFGLQRLMLHASQLSLTHPFTGEPLTIHAGLDDTWMQALSQFGWRGLLPENERVEFSAPSGQDGEISS.

The active site involves Asp54.

It belongs to the pseudouridine synthase RluA family.

It carries out the reaction uridine(65) in tRNA = pseudouridine(65) in tRNA. Responsible for synthesis of pseudouridine from uracil-65 in transfer RNAs. The chain is tRNA pseudouridine synthase C (truC) from Escherichia coli (strain K12).